Consider the following 115-residue polypeptide: NAD(P)H-quinone oxidoreductase subunit M (115 aa).

Belongs to the complex I NdhM subunit family. In terms of assembly, NDH-1 can be composed of about 15 different subunits; different subcomplexes with different compositions have been identified which probably have different functions.

It localises to the cellular thylakoid membrane. It carries out the reaction a plastoquinone + NADH + (n+1) H(+)(in) = a plastoquinol + NAD(+) + n H(+)(out). The catalysed reaction is a plastoquinone + NADPH + (n+1) H(+)(in) = a plastoquinol + NADP(+) + n H(+)(out). Functionally, NDH-1 shuttles electrons from an unknown electron donor, via FMN and iron-sulfur (Fe-S) centers, to quinones in the respiratory and/or the photosynthetic chain. The immediate electron acceptor for the enzyme in this species is believed to be plastoquinone. Couples the redox reaction to proton translocation, and thus conserves the redox energy in a proton gradient. Cyanobacterial NDH-1 also plays a role in inorganic carbon-concentration. This chain is NAD(P)H-quinone oxidoreductase subunit M, found in Prochlorococcus marinus (strain MIT 9515).